A 122-amino-acid chain; its full sequence is Large ribosomal subunit protein bL12 (122 aa).

This sequence belongs to the bacterial ribosomal protein bL12 family. Homodimer. Part of the ribosomal stalk of the 50S ribosomal subunit. Forms a multimeric L10(L12)X complex, where L10 forms an elongated spine to which 2 to 4 L12 dimers bind in a sequential fashion. Binds GTP-bound translation factors.

Forms part of the ribosomal stalk which helps the ribosome interact with GTP-bound translation factors. Is thus essential for accurate translation. The protein is Large ribosomal subunit protein bL12 of Staphylococcus epidermidis (strain ATCC 35984 / DSM 28319 / BCRC 17069 / CCUG 31568 / BM 3577 / RP62A).